The primary structure comprises 109 residues: Large ribosomal subunit protein uL22 (109 aa).

Basic residues predominate over residues 84–95; the sequence is ARGTASRIRKPT. The segment at 84–109 is disordered; it reads ARGTASRIRKPTSHIMVEVSKPSKEA.

This sequence belongs to the universal ribosomal protein uL22 family. As to quaternary structure, part of the 50S ribosomal subunit.

Its function is as follows. This protein binds specifically to 23S rRNA; its binding is stimulated by other ribosomal proteins, e.g. L4, L17, and L20. It is important during the early stages of 50S assembly. It makes multiple contacts with different domains of the 23S rRNA in the assembled 50S subunit and ribosome. Functionally, the globular domain of the protein is located near the polypeptide exit tunnel on the outside of the subunit, while an extended beta-hairpin is found that lines the wall of the exit tunnel in the center of the 70S ribosome. The protein is Large ribosomal subunit protein uL22 of Campylobacter hominis (strain ATCC BAA-381 / DSM 21671 / CCUG 45161 / LMG 19568 / NCTC 13146 / CH001A).